The chain runs to 578 residues: Arginine--tRNA ligase (578 aa).

Residues 127-137 (PNLAKEMHVGH) carry the 'HIGH' region motif.

It belongs to the class-I aminoacyl-tRNA synthetase family. In terms of assembly, monomer.

It is found in the cytoplasm. The enzyme catalyses tRNA(Arg) + L-arginine + ATP = L-arginyl-tRNA(Arg) + AMP + diphosphate. This Pseudomonas syringae pv. tomato (strain ATCC BAA-871 / DC3000) protein is Arginine--tRNA ligase.